The sequence spans 314 residues: 4-hydroxy-3-methylbut-2-enyl diphosphate reductase (314 aa).

Residue cysteine 12 participates in [4Fe-4S] cluster binding. (2E)-4-hydroxy-3-methylbut-2-enyl diphosphate-binding residues include histidine 43 and histidine 81. Residues histidine 43 and histidine 81 each contribute to the dimethylallyl diphosphate site. Residues histidine 43 and histidine 81 each coordinate isopentenyl diphosphate. Cysteine 103 provides a ligand contact to [4Fe-4S] cluster. Histidine 131 serves as a coordination point for (2E)-4-hydroxy-3-methylbut-2-enyl diphosphate. Histidine 131 lines the dimethylallyl diphosphate pocket. Histidine 131 lines the isopentenyl diphosphate pocket. Catalysis depends on glutamate 133, which acts as the Proton donor. Threonine 170 lines the (2E)-4-hydroxy-3-methylbut-2-enyl diphosphate pocket. A [4Fe-4S] cluster-binding site is contributed by cysteine 198. Positions 226, 228, and 271 each coordinate (2E)-4-hydroxy-3-methylbut-2-enyl diphosphate. 3 residues coordinate dimethylallyl diphosphate: serine 226, asparagine 228, and serine 271. Positions 226, 228, and 271 each coordinate isopentenyl diphosphate.

It belongs to the IspH family. It depends on [4Fe-4S] cluster as a cofactor.

It catalyses the reaction isopentenyl diphosphate + 2 oxidized [2Fe-2S]-[ferredoxin] + H2O = (2E)-4-hydroxy-3-methylbut-2-enyl diphosphate + 2 reduced [2Fe-2S]-[ferredoxin] + 2 H(+). The enzyme catalyses dimethylallyl diphosphate + 2 oxidized [2Fe-2S]-[ferredoxin] + H2O = (2E)-4-hydroxy-3-methylbut-2-enyl diphosphate + 2 reduced [2Fe-2S]-[ferredoxin] + 2 H(+). It participates in isoprenoid biosynthesis; dimethylallyl diphosphate biosynthesis; dimethylallyl diphosphate from (2E)-4-hydroxy-3-methylbutenyl diphosphate: step 1/1. It functions in the pathway isoprenoid biosynthesis; isopentenyl diphosphate biosynthesis via DXP pathway; isopentenyl diphosphate from 1-deoxy-D-xylulose 5-phosphate: step 6/6. Its function is as follows. Catalyzes the conversion of 1-hydroxy-2-methyl-2-(E)-butenyl 4-diphosphate (HMBPP) into a mixture of isopentenyl diphosphate (IPP) and dimethylallyl diphosphate (DMAPP). Acts in the terminal step of the DOXP/MEP pathway for isoprenoid precursor biosynthesis. In Bacillus pumilus (strain SAFR-032), this protein is 4-hydroxy-3-methylbut-2-enyl diphosphate reductase.